A 288-amino-acid chain; its full sequence is Pantothenate synthetase (288 aa).

30–37 (MGNLHAGH) is a binding site for ATP. The active-site Proton donor is His37. Gln61 provides a ligand contact to (R)-pantoate. Gln61 serves as a coordination point for beta-alanine. 149-152 (GLKD) is a binding site for ATP. Gln155 contacts (R)-pantoate. Residues Ile178 and 186-189 (LSSR) contribute to the ATP site.

The protein belongs to the pantothenate synthetase family. As to quaternary structure, homodimer.

The protein localises to the cytoplasm. The catalysed reaction is (R)-pantoate + beta-alanine + ATP = (R)-pantothenate + AMP + diphosphate + H(+). It participates in cofactor biosynthesis; (R)-pantothenate biosynthesis; (R)-pantothenate from (R)-pantoate and beta-alanine: step 1/1. Functionally, catalyzes the condensation of pantoate with beta-alanine in an ATP-dependent reaction via a pantoyl-adenylate intermediate. The chain is Pantothenate synthetase from Colwellia psychrerythraea (strain 34H / ATCC BAA-681) (Vibrio psychroerythus).